Here is a 195-residue protein sequence, read N- to C-terminus: Protein GrpE (195 aa).

It belongs to the GrpE family. As to quaternary structure, homodimer.

It is found in the cytoplasm. In terms of biological role, participates actively in the response to hyperosmotic and heat shock by preventing the aggregation of stress-denatured proteins, in association with DnaK and GrpE. It is the nucleotide exchange factor for DnaK and may function as a thermosensor. Unfolded proteins bind initially to DnaJ; upon interaction with the DnaJ-bound protein, DnaK hydrolyzes its bound ATP, resulting in the formation of a stable complex. GrpE releases ADP from DnaK; ATP binding to DnaK triggers the release of the substrate protein, thus completing the reaction cycle. Several rounds of ATP-dependent interactions between DnaJ, DnaK and GrpE are required for fully efficient folding. The polypeptide is Protein GrpE (Francisella tularensis subsp. holarctica (strain FTNF002-00 / FTA)).